Here is a 158-residue protein sequence, read N- to C-terminus: Eukaryotic translation initiation factor 5A (158 aa).

Hypusine is present on lysine 51.

It belongs to the eIF-5A family. Lys-51 undergoes hypusination, a unique post-translational modification that consists in the addition of a butylamino group from spermidine to lysine side chain, leading to the formation of the unusual amino acid hypusine. eIF-5As are the only known proteins to undergo this modification, which is essential for their function.

It localises to the cytoplasm. Translation factor that promotes translation elongation and termination, particularly upon ribosome stalling at specific amino acid sequence contexts. Binds between the exit (E) and peptidyl (P) site of the ribosome and promotes rescue of stalled ribosome: specifically required for efficient translation of polyproline-containing peptides as well as other motifs that stall the ribosome. Acts as a ribosome quality control (RQC) cofactor by joining the RQC complex to facilitate peptidyl transfer during CAT tailing step. This Candida albicans (strain SC5314 / ATCC MYA-2876) (Yeast) protein is Eukaryotic translation initiation factor 5A (ANB1).